A 699-amino-acid polypeptide reads, in one-letter code: Glutamine--fructose-6-phosphate aminotransferase [isomerizing] (699 aa).

Cysteine 2 acts as the Nucleophile in catalysis. The Glutamine amidotransferase type-2 domain maps to 2-303 (CGIFGYANFS…DNDIVHISNG (302 aa)). 2 SIS domains span residues 377 to 516 (HVSG…QNLV) and 544 to 689 (SVKS…ADFP).

The catalysed reaction is D-fructose 6-phosphate + L-glutamine = D-glucosamine 6-phosphate + L-glutamate. The protein operates within nucleotide-sugar biosynthesis; UDP-N-acetyl-alpha-D-glucosamine biosynthesis; alpha-D-glucosamine 6-phosphate from D-fructose 6-phosphate: step 1/1. In terms of biological role, involved in amino sugar synthesis (formation of chitin, supplies the amino sugars of asparagine-linked oligosaccharides of glycoproteins). The polypeptide is Glutamine--fructose-6-phosphate aminotransferase [isomerizing] (GFA1) (Encephalitozoon cuniculi (strain GB-M1) (Microsporidian parasite)).